The primary structure comprises 709 residues: Phosphoprotein (709 aa).

The tract at residues 1 to 35 (MDKLELVNDGLNIIDFIQKNQKEIQKTYGRSSIQQ) is N0 binding. A disordered region spans residues 53–92 (SGESEQVEGGMSKDDGDVERRNLEDLSSTSPTDGTIGKRV). A compositionally biased stretch (basic and acidic residues) spans 63–76 (MSKDDGDVERRNLE). The tract at residues 110–140 (VVTDVVYHDHGGECTGYGFTSSPERGWSDYT) is interaction with host STAT1. Ser257 carries the phosphoserine; by host modification. Residues 265-324 (ISPEDEEPSSVGGKPNESIGRTIEGQSIRDNLQAKDNKSTDVPGAGPKDSAVKEEPPQKR) are disordered. Position 350 is a phosphoserine; by host (Ser350). Residues 384 to 473 (VQTADRQRPG…VNPVDDNDSL (90 aa)) form a disordered region. 2 stretches are compositionally biased toward polar residues: residues 416–426 (GTENVPGSKSG) and 444–456 (NAEN…STAV). Residues 475-580 (DKYIMPSDDF…LVSMMIMIPG (106 aa)) are multimerization.

In terms of assembly, homotetramer. Interacts (via multimerization domain) with polymerase L; this interaction forms the polymerase L-P complex. Interacts (via N-terminus) with N0 (via Ncore); this interaction allows P to chaperon N0 to avoid N polymerization before encapsidation. Interacts (via C-terminus) with N-RNA template (via C-terminus); this interaction positions the polymerase on the template for both transcription and replication. Interacts with host STAT1.

The protein resides in the virion. It is found in the host cytoplasm. Its function is as follows. Essential cofactor of the RNA polymerase L that plays a central role in the transcription and replication by forming the polymerase complex with RNA polymerase L and recruiting L to the genomic N-RNA template for RNA synthesis. Also plays a central role in the encapsidation of nascent RNA chains by forming the encapsidation complex with the nucleocapsid protein N (N-P complex). Acts as a chaperone for newly synthesized free N protein, so-called N0, allowing encapsidation of nascent RNA chains during replication. The nucleoprotein protein N prevents excessive phosphorylation of P, which leads to down-regulation of viral transcription/ replication. Participates, together with N, in the formation of viral factories (viroplasms), which are large inclusions in the host cytoplasm where replication takes place. In Nipah virus, this protein is Phosphoprotein (P/V/C).